The sequence spans 323 residues: Muscleblind-like protein 3 (323 aa).

4 C3H1-type zinc fingers span residues 13–41, 47–73, 177–205, and 213–239; these read WLTLEVCREFQRGTCSRSDAECKFAHPSR, NGRVIACFDSLKGRCTRENCKYLHPPP, TDKLEVCREFQRGNCTRGESDCRYAHPLE, and ENSVIVCMDYIKGRCSRDKCKYFHPPA.

Belongs to the muscleblind family. In terms of tissue distribution, expressed in fast and slow myotomal muscle, heart, liver, skin, brain and testis.

It localises to the nucleus. The protein localises to the cytoplasm. Involved in pre-mRNA alternative splicing regulation. Could inhibit terminal muscle differentiation, acting at approximately the time of myogenin induction. The chain is Muscleblind-like protein 3 (mbnl3) from Takifugu rubripes (Japanese pufferfish).